A 320-amino-acid chain; its full sequence is L-lactate dehydrogenase (320 aa).

NAD(+) is bound by residues V18, D39, R44, Y69, and 83-84; that span reads GA. Substrate is bound by residues Q86 and R92. Residues T105, 122–124, and S147 contribute to the NAD(+) site; that span reads AAN. 124–127 lines the substrate pocket; sequence NPVD. 152 to 155 is a substrate binding site; the sequence is DSAR. H179 functions as the Proton acceptor in the catalytic mechanism. Y223 carries the phosphotyrosine modification. T232 is a binding site for substrate.

The protein belongs to the LDH/MDH superfamily. LDH family. As to quaternary structure, homotetramer.

It localises to the cytoplasm. The catalysed reaction is (S)-lactate + NAD(+) = pyruvate + NADH + H(+). Its pathway is fermentation; pyruvate fermentation to lactate; (S)-lactate from pyruvate: step 1/1. Catalyzes the conversion of lactate to pyruvate. The sequence is that of L-lactate dehydrogenase from Pediococcus pentosaceus (strain ATCC 25745 / CCUG 21536 / LMG 10740 / 183-1w).